The sequence spans 251 residues: UDP-N-acetylglucosamine--dolichyl-phosphate N-acetylglucosaminyltransferase (251 aa).

The chain crosses the membrane as a helical span at residues 150–167 (VGNLGLSFITFLLGGYYV).

It belongs to the glycosyltransferase 2 family.

It is found in the cell membrane. It carries out the reaction a di-trans,poly-cis-dolichyl phosphate + UDP-N-acetyl-alpha-D-glucosamine = an N-acetyl-alpha-D-glucosaminyl-phospho-di-trans,poly-cis-dolichol + UDP. The protein operates within cell surface structure biogenesis; S-layer biogenesis. It participates in protein modification; protein glycosylation. In terms of biological role, involved in the assembly of an N-linked disaccharide that decorates the S-layer glycoprotein and flagellins. AglK initiates N-linked glycosylation through the formation of alpha-linked dolichyl monophosphate N-acetylglucosamine. It catalyzes the transfer of GlcNAc from the donor substrate UDP-GlcNAc to dolichyl phosphate C55 (Dol-P) to yield Dol-P-GlcNAc. AglK reaction proceeds with retention of stereochemistry. The reaction is specific for UDP-GlcNAc. AglK shows a stronger preference for short dolichol (C55-60 Dol-P) substrates compared with the longer (C85-105 Dol-P). In Methanococcus voltae, this protein is UDP-N-acetylglucosamine--dolichyl-phosphate N-acetylglucosaminyltransferase.